Consider the following 78-residue polypeptide: Large ribosomal subunit protein bL28 (78 aa).

A disordered region spans residues 1–20 (MSRVCQVTGKRPVTGNNRSH).

This sequence belongs to the bacterial ribosomal protein bL28 family.

This is Large ribosomal subunit protein bL28 from Vibrio campbellii (strain ATCC BAA-1116).